The chain runs to 205 residues: Small ribosomal subunit protein uS4c (205 aa).

Residues 93 to 154 (MRLDNTIFRL…RTQTIALIQQ (62 aa)) enclose the S4 RNA-binding domain.

The protein belongs to the universal ribosomal protein uS4 family. As to quaternary structure, part of the 30S ribosomal subunit. Contacts protein S5. The interaction surface between S4 and S5 is involved in control of translational fidelity.

Its subcellular location is the plastid. The protein localises to the chloroplast. In terms of biological role, one of the primary rRNA binding proteins, it binds directly to 16S rRNA where it nucleates assembly of the body of the 30S subunit. With S5 and S12 plays an important role in translational accuracy. This Chaetosphaeridium globosum (Charophycean green alga) protein is Small ribosomal subunit protein uS4c (rps4).